The following is a 1235-amino-acid chain: JNK-interacting protein 3 (1235 aa).

The disordered stretch occupies residues 1–22 (MMDNDDALLNNGGPQSGAETVY). One can recognise an RH1 domain in the interval 25–113 (EDNNMVMSEK…VTQYEREKSA (89 aa)). Positions 84 to 184 (RINQEQDVEL…NKLHERYTEL (101 aa)) form a coiled coil. The interval 278–325 (GAATDSLQQQHQATSPQSPPDTSPVVPNVPPANVGRSTTKKEQRSDNN) is disordered. Over residues 282–293 (DSLQQQHQATSP) the composition is skewed to polar residues. Positions 294–307 (QSPPDTSPVVPNVP) are enriched in pro residues. A coiled-coil region spans residues 366-493 (GKEVENLIME…AVRLTEILRA (128 aa)). The RH2 domain maps to 456–526 (RKRFTRVEMA…TPSNRPTERI (71 aa)). Disordered stretches follow at residues 520 to 572 (NRPT…MHPA), 813 to 852 (KPKS…PVNA), and 869 to 897 (PGAP…STGS). Positions 529–543 (GLGGGPMFRNTGGGS) are enriched in gly residues. Composition is skewed to low complexity over residues 544–555 (PAHSHGSPSRGS) and 821–830 (NSNSKPQQQQ). Residues 874–897 (RLSSGNSGSDGNQANNNNSSSTGS) show a composition bias toward polar residues.

The protein belongs to the JIP scaffold family. As to quaternary structure, forms homo- and heterooligomeric complexes. Binds the TPR motif-containing C-terminal of kinesin light chain, Klc. Pre-assembled syd scaffolding complexes are then transported as a cargo of kinesin, to the required subcellular location.

The protein localises to the cytoplasm. The JNK-interacting protein (JIP) group of scaffold proteins selectively mediates JNK-signaling by aggregating specific components of the MAPK cascade to form a functional JNK signaling module. May function as a regulator of vesicle transport, through interactions with the JNK-signaling components and motor proteins. Syd is required for efficient kinesin-I mediated axonal transport. The protein is JNK-interacting protein 3 of Drosophila pseudoobscura pseudoobscura (Fruit fly).